The chain runs to 1368 residues: Alpha-latrotoxin-Lg1a (1368 aa).

The helix H8 is the probable transmembrane region of the tetrameric pore inserted in the target cell membrane stretch occupies residues Val217–Leu236. The cysteines at positions 392 and 1044 are disulfide-linked. ANK repeat units follow at residues Gln469 to Gln500, Lys504 to Ser533, Phe538 to Glu568, Asp572 to Val601, Lys605 to Ala635, Asn639 to Ala669, Gly674 to Leu704, Gly708 to Gln737, Glu741 to Ala770, Thr774 to Glu803, Asn807 to Ile837, Asn841 to Thr870, Lys874 to Ile903, Asp907 to Trp936, Ile953 to Ser981, Ile982 to Gly1011, Lys1013 to His1042, Asn1046 to Arg1075, Leu1079 to Ile1109, and Asn1115 to Ile1144. Residues Lys1174 to Arg1177 form a furin-like endopeptidase recognition region region. A propeptide spanning residues Glu1178–Ser1368 is cleaved from the precursor.

This sequence belongs to the cationic peptide 01 (latrotoxin) family. 03 (alpha-latrotoxin) subfamily. As to quaternary structure, homotetramer in membranes. Expressed in venom gland, cephalothorax, and abdomen tissues from both males and females.

It is found in the secreted. The protein resides in the target cell membrane. In terms of biological role, presynaptic neurotoxin that causes massive release of neurotransmitters from vertebrate (but not invertebrate) nerve terminals and endocrine cells via a complex mechanism involving activation of receptor(s) and toxin insertion into the plasma membrane with subsequent pore formation. Binds to neurexin-1-alpha (NRXN1) in a calcium dependent manner, adhesion G protein-coupled receptor L1 (ADGRL1, also termed latrophilin-1 and calcium-independent receptor of latrotoxin (CIRL)), and receptor-type tyrosine-protein phosphatase S (PTPRS), also termed PTP sigma. NRXN1 and PTPRS are suggested to provide a platform for binding and subsequent pore formation events. In contrast, binding to ADGRL1 does not involve oligomerization and channel formation, but direct downstream stimulation of the synaptic fusion machinery. The chain is Alpha-latrotoxin-Lg1a from Latrodectus geometricus (Brown widow spider).